Consider the following 129-residue polypeptide: Cocaine- and amphetamine-regulated transcript protein (129 aa).

An N-terminal signal peptide occupies residues 1 to 27; it reads MESSRLRLLPLLGAALLLLLPLLGARA. Phosphotyrosine is present on Tyr41. Position 48 is a phosphoserine (Ser48). 3 cysteine pairs are disulfide-bonded: Cys95–Cys113, Cys101–Cys121, and Cys115–Cys128.

Belongs to the CART family.

The protein resides in the secreted. In terms of biological role, satiety factor closely associated with the actions of leptin and neuropeptide y; this anorectic peptide inhibits both normal and starvation-induced feeding and completely blocks the feeding response induced by neuropeptide Y and regulated by leptin in the hypothalamus. The polypeptide is Cocaine- and amphetamine-regulated transcript protein (Cartpt) (Mus musculus (Mouse)).